The sequence spans 403 residues: 8-amino-7-oxononanoate synthase (403 aa).

R30 is a substrate binding site. 121–122 (GY) contacts pyridoxal 5'-phosphate. Substrate is bound at residue H146. Pyridoxal 5'-phosphate-binding residues include S192, H220, and T248. The residue at position 251 (K251) is an N6-(pyridoxal phosphate)lysine. T367 is a binding site for substrate.

This sequence belongs to the class-II pyridoxal-phosphate-dependent aminotransferase family. BioF subfamily. In terms of assembly, homodimer. The cofactor is pyridoxal 5'-phosphate.

The enzyme catalyses 6-carboxyhexanoyl-[ACP] + L-alanine + H(+) = (8S)-8-amino-7-oxononanoate + holo-[ACP] + CO2. Its pathway is cofactor biosynthesis; biotin biosynthesis. Catalyzes the decarboxylative condensation of pimeloyl-[acyl-carrier protein] and L-alanine to produce 8-amino-7-oxononanoate (AON), [acyl-carrier protein], and carbon dioxide. This Burkholderia vietnamiensis (strain G4 / LMG 22486) (Burkholderia cepacia (strain R1808)) protein is 8-amino-7-oxononanoate synthase.